The following is a 316-amino-acid chain: Ribose-phosphate pyrophosphokinase (316 aa).

ATP contacts are provided by residues 39–41 and 98–99; these read DGE and RQ. Residues histidine 133 and aspartate 172 each coordinate Mg(2+). Lysine 195 is a catalytic residue. D-ribose 5-phosphate is bound by residues arginine 197, aspartate 221, and 225 to 229; that span reads DTANT.

This sequence belongs to the ribose-phosphate pyrophosphokinase family. Class I subfamily. As to quaternary structure, homohexamer. Mg(2+) serves as cofactor.

It is found in the cytoplasm. It catalyses the reaction D-ribose 5-phosphate + ATP = 5-phospho-alpha-D-ribose 1-diphosphate + AMP + H(+). The protein operates within metabolic intermediate biosynthesis; 5-phospho-alpha-D-ribose 1-diphosphate biosynthesis; 5-phospho-alpha-D-ribose 1-diphosphate from D-ribose 5-phosphate (route I): step 1/1. In terms of biological role, involved in the biosynthesis of the central metabolite phospho-alpha-D-ribosyl-1-pyrophosphate (PRPP) via the transfer of pyrophosphoryl group from ATP to 1-hydroxyl of ribose-5-phosphate (Rib-5-P). The protein is Ribose-phosphate pyrophosphokinase of Nitrosomonas europaea (strain ATCC 19718 / CIP 103999 / KCTC 2705 / NBRC 14298).